The following is a 192-amino-acid chain: Ras-like GTP-binding protein rhoA (192 aa).

12-19 (GDGACGKT) is a GTP binding site. The Effector region motif lies at 34–42 (YVPTVFENY). GTP contacts are provided by residues 59-63 (DTAGQ) and 117-120 (NKRD). Cysteine 189 is modified (cysteine methyl ester). Cysteine 189 is lipidated: S-geranylgeranyl cysteine. Positions 190–192 (MIL) are cleaved as a propeptide — removed in mature form.

The protein belongs to the small GTPase superfamily. Rho family. As to quaternary structure, may interact with unc-89 (via DN and PH domains). Interacts with bli-3 and memo-1. In terms of tissue distribution, in larvae and adults, enriched at the tip of the head where the anterior sensory organ is located and in the pharyngeal nerve ring (at protein level). In embryos, enriched at the boundaries of dorsal cells undergoing intercalation, ventral enclosure and elongation.

The protein localises to the cell membrane. It localises to the cytoplasm. The protein resides in the cytoskeleton. Its subcellular location is the cell cortex. GTP hydrolysis is stimulated by unc-89. Its function is as follows. Required for ventral migration of epidermal cells during ventral enclosure in the embryo and for cell elongation. Also required for ventral migration of P cells during larval development. Involved in asymmetric spindle positioning during anaphase and establishment of cell polarity during embryo development. In adults, involved in regulation of multiple processes including locomotion, pharyngeal pumping, fecundity, ovulation, defecation and body morphology. In body wall muscles, regulates organization of myosin thick filaments downstream of unc-89. Association with the oxidase bli-3 promotes ROS production and this interaction may be modulated by memo-1, in order to control the oxidative stress response and longevity. The protein is Ras-like GTP-binding protein rhoA of Caenorhabditis elegans.